The primary structure comprises 112 residues: DNA-directed RNA polymerases I and III subunit RPAC2 (112 aa).

This sequence belongs to the archaeal Rpo11/eukaryotic RPB11/RPC19 RNA polymerase subunit family. As to quaternary structure, component of the RNA polymerase I (Pol I) and RNA polymerase III (Pol III) complexes consisting of at least 13 and 17 subunits, respectively.

Its subcellular location is the nucleus. Its function is as follows. DNA-dependent RNA polymerase catalyzes the transcription of DNA into RNA using the four ribonucleoside triphosphates as substrates. Common core component of RNA polymerases I and III which synthesize ribosomal RNA precursors and small RNAs, such as 5S rRNA and tRNAs, respectively. This Danio rerio (Zebrafish) protein is DNA-directed RNA polymerases I and III subunit RPAC2 (polr1d).